A 40-amino-acid chain; its full sequence is Cytolysin SmT-1 (40 aa).

The interval 3–12 (ALAGTIIAGA) is plays an important role in the hemolytic activity. Residues 11-30 (GASLGFQILDKVLGELGKVS) form an N-terminal region region.

Belongs to the actinoporin family. Sea anemone subfamily. As to quaternary structure, octamer or nonamer in membranes. Monomer in the soluble state.

It localises to the secreted. The protein localises to the nematocyst. Its subcellular location is the target cell membrane. In terms of biological role, pore-forming protein that forms cations-selective hydrophilic pores of around 1 nm and causes cardiac stimulation and cytolysis. Pore formation is a multi-step process that involves specific recognition of membrane sphingomyelin (but neither cholesterol nor phosphatidylcholine) using aromatic rich region and adjacent phosphocholine (POC) binding site, firm binding to the membrane (mainly driven by hydrophobic interactions) accompanied by the transfer of the N-terminal region to the lipid-water interface and finally pore formation after oligomerization of monomers. This toxin shows hemolytic activities. This chain is Cytolysin SmT-1, found in Stichodactyla mertensii (Merten's carpet sea anemone).